The following is a 392-amino-acid chain: Caveolae-associated protein 1 (392 aa).

The residue at position 1 (M1) is an N-acetylmethionine. Positions 1–10 are enriched in basic and acidic residues; the sequence is MEDVTLHIVE. The interval 1–45 is disordered; it reads MEDVTLHIVERPYSGFPDASSEGPEPTQGEARATEEPSGTGSDEL. The tract at residues 1 to 100 is required for homotrimerization and for interaction with CAVIN2 and CAVIN3; the sequence is MEDVTLHIVE…IQGELSKLGK (100 aa). Phosphoserine is present on residues S21 and S38. T40 bears the Phosphothreonine mark. S42 and S48 each carry phosphoserine. A nuclear export signal region spans residues 54–64; it reads VLVLSLLDKII. The interval 55–77 is leucine-zipper 1; the sequence is LVLSLLDKIIGAVDQIQLTQAQL. A Glycyl lysine isopeptide (Lys-Gly) (interchain with G-Cter in SUMO2) cross-link involves residue K118. S120 is subject to Phosphoserine. K124 is covalently cross-linked (Glycyl lysine isopeptide (Lys-Gly) (interchain with G-Cter in SUMO2)). Residues 138–154 are nuclear localization signal; sequence KKLEVNEAELLRRRNFK. Phosphotyrosine is present on Y158. Residue K163 forms a Glycyl lysine isopeptide (Lys-Gly) (interchain with G-Cter in SUMO1); alternate linkage. A Glycyl lysine isopeptide (Lys-Gly) (interchain with G-Cter in SUMO2); alternate cross-link involves residue K163. A Glycyl lysine isopeptide (Lys-Gly) (interchain with G-Cter in SUMO2) cross-link involves residue K167. Residues 168–188 form a leucine-zipper 2 region; that stretch reads LSVSKSLKESEALPEKEGDEL. S169 and S171 each carry phosphoserine. Residue K172 forms a Glycyl lysine isopeptide (Lys-Gly) (interchain with G-Cter in SUMO2) linkage. Phosphoserine is present on residues S173 and S177. A compositionally biased stretch (basic and acidic residues) spans 173 to 183; that stretch reads SLKESEALPEK. Residues 173–197 are disordered; the sequence is SLKESEALPEKEGDELGEGERPEDD. Acidic residues predominate over residues 184–197; sequence EGDELGEGERPEDD. A Phosphothreonine modification is found at T198. Positions 201–284 form a coiled coil; sequence IELSSDEAVE…RMNKLGTRLV (84 aa). 2 positions are modified to phosphoserine: S204 and S205. The segment at 235–251 is nuclear localization signal; that stretch reads KKAFSKEKMEKTKVRTR. The leucine-zipper 3 stretch occupies residues 259–299; sequence LKTKENLEKTRHTLEKRMNKLGTRLVPVERREKLKTSRDKL. S302 is subject to Phosphoserine. T304 is subject to Phosphothreonine. Y310 is modified (phosphotyrosine). Residue K328 forms a Glycyl lysine isopeptide (Lys-Gly) (interchain with G-Cter in SUMO2) linkage. A disordered region spans residues 347-367; sequence GPEDDEVGAERGEATDLLRGS. Phosphoserine occurs at positions 367, 368, 381, 389, and 391.

Belongs to the CAVIN family. In terms of assembly, component of the CAVIN complex composed of CAVIN1, CAVIN2, CAVIN3 and CAVIN4. Homotrimer. Interacts with LIPE in the adipocyte cytoplasm. Interacts with RNA polymerase I subunit POLR1A/RPA1. Interacts with TTF1. Binds the 3' end of pre-rRNA. Interacts with transcription factor ZNF148. Interacts with CAV1, CAVIN2 and CAVIN3. Interacts with CAVIN4. Post-translationally, phosphorylated. Present in active and inactive forms. Changes in phosphorylation pattern may alter activity. Phosphorylation at Tyr-158 is essential for its function in the regulation of the ribosomal transcriptional activity. Monoubiquitinated. In terms of tissue distribution, expressed in the heart, stomach, adipose tissue and lung (at protein level). Expressed in testis, kidney, muscle, liver, spleen and brain.

It is found in the membrane. The protein resides in the caveola. The protein localises to the cell membrane. Its subcellular location is the microsome. It localises to the endoplasmic reticulum. It is found in the cytoplasm. The protein resides in the cytosol. The protein localises to the mitochondrion. Its subcellular location is the nucleus. In terms of biological role, plays an important role in caveolae formation and organization. Essential for the formation of caveolae in all tissues. Core component of the CAVIN complex which is essential for recruitment of the complex to the caveolae in presence of calveolin-1 (CAV1). Essential for normal oligomerization of CAV1. Promotes ribosomal transcriptional activity in response to metabolic challenges in the adipocytes and plays an important role in the formation of the ribosomal transcriptional loop. Dissociates transcription complexes paused by DNA-bound TTF1, thereby releasing both RNA polymerase I and pre-RNA from the template. The caveolae biogenesis pathway is required for the secretion of proteins such as GASK1A. In Mus musculus (Mouse), this protein is Caveolae-associated protein 1 (Cavin1).